Reading from the N-terminus, the 233-residue chain is Probable septum site-determining protein MinC (233 aa).

It belongs to the MinC family. As to quaternary structure, interacts with MinD and FtsZ.

In terms of biological role, cell division inhibitor that blocks the formation of polar Z ring septums. Rapidly oscillates between the poles of the cell to destabilize FtsZ filaments that have formed before they mature into polar Z rings. Prevents FtsZ polymerization. This is Probable septum site-determining protein MinC from Proteus mirabilis (strain HI4320).